Reading from the N-terminus, the 425-residue chain is Polyribonucleotide 5'-hydroxyl-kinase Clp1 (425 aa).

Residues Glu-22, Lys-62, and 124–129 contribute to the ATP site; that span reads DVGKST.

The protein belongs to the Clp1 family. Clp1 subfamily. Component of the tRNA splicing endonuclease complex. Component of pre-mRNA cleavage complex II (CF-II).

It localises to the nucleus. The enzyme catalyses a 5'-end dephospho-2'-deoxyribonucleoside-DNA + ATP = a 5'-end 5'-phospho-2'-deoxyribonucleoside-DNA + ADP + H(+). It carries out the reaction a 5'-end dephospho-ribonucleoside-RNA + ATP = a 5'-end 5'-phospho-ribonucleoside-RNA + ADP + H(+). Its function is as follows. Polynucleotide kinase that can phosphorylate the 5'-hydroxyl groups of double-stranded RNA (dsRNA), single-stranded RNA (ssRNA), double stranded DNA (dsDNA) and double-stranded DNA:RNA hybrids. dsRNA is phosphorylated more efficiently than dsDNA, and the RNA component of a DNA:RNA hybrid is phosphorylated more efficiently than the DNA component. Plays a role in both tRNA splicing and mRNA 3'-end formation. Component of the tRNA splicing endonuclease complex: phosphorylates the 5'-terminus of the tRNA 3'-exon during tRNA splicing; this phosphorylation event is a prerequisite for the subsequent ligation of the two exon halves and the production of a mature tRNA. Its role in tRNA splicing and maturation is required for cerebellar development. Component of the pre-mRNA cleavage complex II (CF-II), which seems to be required for mRNA 3'-end formation. Also phosphorylates the 5'-terminus of exogenously introduced short interfering RNAs (siRNAs), which is a necessary prerequisite for their incorporation into the RNA-induced silencing complex (RISC). However, endogenous siRNAs and microRNAs (miRNAs) that are produced by the cleavage of dsRNA precursors by dicer1 already contain a 5'-phosphate group, so this protein may be dispensible for normal RNA-mediated gene silencing. The sequence is that of Polyribonucleotide 5'-hydroxyl-kinase Clp1 from Gallus gallus (Chicken).